The sequence spans 434 residues: D-amino acid dehydrogenase (434 aa).

Residue 3 to 17 (VLVLGSGVIGTASAY) participates in FAD binding.

Belongs to the DadA oxidoreductase family. It depends on FAD as a cofactor.

It catalyses the reaction a D-alpha-amino acid + A + H2O = a 2-oxocarboxylate + AH2 + NH4(+). It functions in the pathway amino-acid degradation; D-alanine degradation; NH(3) and pyruvate from D-alanine: step 1/1. Its function is as follows. Oxidative deamination of D-amino acids. This is D-amino acid dehydrogenase from Pseudomonas putida (strain ATCC 700007 / DSM 6899 / JCM 31910 / BCRC 17059 / LMG 24140 / F1).